The following is a 282-amino-acid chain: Release factor glutamine methyltransferase (282 aa).

S-adenosyl-L-methionine is bound by residues 120 to 124 (GVGSG), Asp143, and Asn189. Substrate is bound at residue 189–192 (NPPY).

Belongs to the protein N5-glutamine methyltransferase family. PrmC subfamily.

It carries out the reaction L-glutaminyl-[peptide chain release factor] + S-adenosyl-L-methionine = N(5)-methyl-L-glutaminyl-[peptide chain release factor] + S-adenosyl-L-homocysteine + H(+). In terms of biological role, methylates the class 1 translation termination release factors RF1/PrfA and RF2/PrfB on the glutamine residue of the universally conserved GGQ motif. The protein is Release factor glutamine methyltransferase of Dictyoglomus turgidum (strain DSM 6724 / Z-1310).